Consider the following 452-residue polypeptide: Bifunctional protein GlmU (452 aa).

The tract at residues 1–230 (MSRSRSAIIL…ADEVLGVNSR (230 aa)) is pyrophosphorylase. UDP-N-acetyl-alpha-D-glucosamine-binding positions include 10–13 (LAAG), Lys-24, Gln-75, and 80–81 (GT). Asp-105 contacts Mg(2+). Positions 141, 156, 171, and 228 each coordinate UDP-N-acetyl-alpha-D-glucosamine. Mg(2+) is bound at residue Asn-228. The tract at residues 231 to 251 (ADLAEAEAAFQSRMRQSMMAD) is linker. The segment at 252-452 (GVTLIAPETV…ARKARKDSQT (201 aa)) is N-acetyltransferase. UDP-N-acetyl-alpha-D-glucosamine is bound by residues Arg-317 and Lys-335. His-347 acts as the Proton acceptor in catalysis. UDP-N-acetyl-alpha-D-glucosamine-binding residues include Tyr-350 and Asn-361. Acetyl-CoA is bound by residues Ala-364, 370–371 (NY), Ser-389, Thr-407, and Arg-424.

In the N-terminal section; belongs to the N-acetylglucosamine-1-phosphate uridyltransferase family. It in the C-terminal section; belongs to the transferase hexapeptide repeat family. As to quaternary structure, homotrimer. The cofactor is Mg(2+).

It localises to the cytoplasm. It carries out the reaction alpha-D-glucosamine 1-phosphate + acetyl-CoA = N-acetyl-alpha-D-glucosamine 1-phosphate + CoA + H(+). It catalyses the reaction N-acetyl-alpha-D-glucosamine 1-phosphate + UTP + H(+) = UDP-N-acetyl-alpha-D-glucosamine + diphosphate. The protein operates within nucleotide-sugar biosynthesis; UDP-N-acetyl-alpha-D-glucosamine biosynthesis; N-acetyl-alpha-D-glucosamine 1-phosphate from alpha-D-glucosamine 6-phosphate (route II): step 2/2. It participates in nucleotide-sugar biosynthesis; UDP-N-acetyl-alpha-D-glucosamine biosynthesis; UDP-N-acetyl-alpha-D-glucosamine from N-acetyl-alpha-D-glucosamine 1-phosphate: step 1/1. It functions in the pathway bacterial outer membrane biogenesis; LPS lipid A biosynthesis. In terms of biological role, catalyzes the last two sequential reactions in the de novo biosynthetic pathway for UDP-N-acetylglucosamine (UDP-GlcNAc). The C-terminal domain catalyzes the transfer of acetyl group from acetyl coenzyme A to glucosamine-1-phosphate (GlcN-1-P) to produce N-acetylglucosamine-1-phosphate (GlcNAc-1-P), which is converted into UDP-GlcNAc by the transfer of uridine 5-monophosphate (from uridine 5-triphosphate), a reaction catalyzed by the N-terminal domain. This Maricaulis maris (strain MCS10) (Caulobacter maris) protein is Bifunctional protein GlmU.